Here is an 84-residue protein sequence, read N- to C-terminus: Toxin BmKaTx16 (84 aa).

An N-terminal signal peptide occupies residues Met1–Ser19. The 63-residue stretch at Arg21 to His83 folds into the LCN-type CS-alpha/beta domain. 4 disulfides stabilise this stretch: Cys31–Cys82, Cys35–Cys55, Cys41–Cys65, and Cys45–Cys67. Residue Arg84 is a propeptide, removed by a carboxypeptidase.

This sequence belongs to the long (4 C-C) scorpion toxin superfamily. Sodium channel inhibitor family. Alpha subfamily. Expressed by the venom gland.

Its subcellular location is the secreted. Alpha toxins bind voltage-independently at site-3 of sodium channels (Nav) and inhibit the inactivation of the activated channels, thereby blocking neuronal transmission. This Olivierus martensii (Manchurian scorpion) protein is Toxin BmKaTx16.